Consider the following 409-residue polypeptide: Mitochondrial protein import protein MAS5 (409 aa).

A necessary for HAP1 repression in the absence of heme region spans residues 1 to 172 (MVKETKFYDI…NGQGIKFVTR (172 aa)). One can recognise a J domain in the interval 4-72 (ETKFYDILGV…RDIYDQFGED (69 aa)). Substrate-binding positions include I116 and 135-137 (LAL). The CR-type zinc-finger motif lies at 130 to 213 (GRTAKLALNK…CNGKKVENER (84 aa)). Residues C143, C146, C159, C162, C185, and C188 each contribute to the Zn(2+) site. CXXCXGXG motif repeat units follow at residues 143–150 (CKECEGRG), 159–166 (CTSCNGQG), and 185–192 (CDVCHGTG). Residue K198 forms a Glycyl lysine isopeptide (Lys-Gly) (interchain with G-Cter in ubiquitin) linkage. Zn(2+) is bound by residues C201 and C204. One copy of the CXXCXGXG motif repeat lies at 201 to 208 (CKSCNGKK). Residues 215–216 (IL) and 247–249 (VVF) contribute to the substrate site. Residues 382 to 409 (RTRASRGGANYDSDEEEQGGEGVQCASQ) are disordered. At C406 the chain carries Cysteine methyl ester. C406 carries the S-farnesyl cysteine lipid modification. Residues 407 to 409 (ASQ) constitute a propeptide, removed in mature form.

As to quaternary structure, homodimer. Interacts with HAP1. Component of the HMC including HAP1, SRO9 and YDJ1.

It localises to the cytoplasm. Its subcellular location is the perinuclear region. In terms of biological role, probably involved in mitochondrial protein import. Is also required for efficient translocation of pre-pro-alpha-factor. Involved in heme regulation of HAP1, as a component of the high-molecular-weight (HMC) complex. This is Mitochondrial protein import protein MAS5 (YDJ1) from Saccharomyces cerevisiae (strain ATCC 204508 / S288c) (Baker's yeast).